A 606-amino-acid polypeptide reads, in one-letter code: NADH-ubiquinone oxidoreductase chain 5 (606 aa).

The next 16 membrane-spanning stretches (helical) occupy residues 1-21, 35-55, 87-107, 114-134, 140-160, 171-191, 211-233, 241-261, 272-292, 301-320, 325-347, 366-386, 413-433, 457-477, 482-502, and 582-602; these read MNLF…PIMM, YVKN…MVYL, LMFM…SMWY, INQF…LVTA, LFIG…WWFG, AILY…WFLS, FPLM…HPWL, TPVS…FLLV, LIQT…AICA, IIAF…IGLN, AFLH…GSII, LPFT…MPFL, LIAT…ALLG, LLVG…PMTT, MPLH…IIAF, and GLIK…MILF.

The protein belongs to the complex I subunit 5 family. In terms of assembly, core subunit of respiratory chain NADH dehydrogenase (Complex I) which is composed of 45 different subunits.

The protein resides in the mitochondrion inner membrane. It carries out the reaction a ubiquinone + NADH + 5 H(+)(in) = a ubiquinol + NAD(+) + 4 H(+)(out). In terms of biological role, core subunit of the mitochondrial membrane respiratory chain NADH dehydrogenase (Complex I) which catalyzes electron transfer from NADH through the respiratory chain, using ubiquinone as an electron acceptor. Essential for the catalytic activity and assembly of complex I. This Balaenoptera physalus (Fin whale) protein is NADH-ubiquinone oxidoreductase chain 5 (MT-ND5).